The chain runs to 424 residues: UDP-sugar transporter protein SLC35A5 (424 aa).

Residues M1–H8 lie on the Cytoplasmic side of the membrane. Residues P9 to L29 form a helical membrane-spanning segment. Topologically, residues S30–T53 are lumenal. Residues V54 to I74 form a helical membrane-spanning segment. The Cytoplasmic segment spans residues K75–D93. A helical membrane pass occupies residues F94–S116. Residues Y117 to Q119 are Lumenal-facing. A helical membrane pass occupies residues P120 to L142. Residues K143–N147 are Cytoplasmic-facing. A helical transmembrane segment spans residues W148 to T168. The Lumenal portion of the chain corresponds to K169–R228. N-linked (GlcNAc...) asparagine glycosylation is present at N204. A helical membrane pass occupies residues L229–Y249. Residues N250–S263 are Cytoplasmic-facing. Residues I264–G284 form a helical membrane-spanning segment. The Lumenal segment spans residues L285–S303. Residues A304 to L324 traverse the membrane as a helical segment. Over K325–M330 the chain is Cytoplasmic. Residues F331–F351 form a helical membrane-spanning segment. The Lumenal segment spans residues D352–R354. Residues P355–A375 traverse the membrane as a helical segment. Over S376–F424 the chain is Cytoplasmic. S394, S416, and S419 each carry phosphoserine. Residues L397 to F424 form a disordered region. Over residues L408–D417 the composition is skewed to basic and acidic residues.

This sequence belongs to the nucleotide-sugar transporter family. SLC35A subfamily. In terms of assembly, probably forms homooligomers and heterooligomers with SLC35A1, SLC35A2, SLC35A3 and SLC35A4.

It is found in the golgi apparatus membrane. It carries out the reaction UMP(out) + UDP-alpha-D-glucuronate(in) = UMP(in) + UDP-alpha-D-glucuronate(out). It catalyses the reaction UMP(out) + UDP-N-acetyl-alpha-D-glucosamine(in) = UMP(in) + UDP-N-acetyl-alpha-D-glucosamine(out). The enzyme catalyses UDP-N-acetyl-alpha-D-galactosamine(in) + UMP(out) = UDP-N-acetyl-alpha-D-galactosamine(out) + UMP(in). Probable UDP-sugar:UMP transmembrane antiporter involved in UDP-alpha-D-glucuronate/UDP-GlcA, UDP-GlcNAc/UDP-N-acetyl-alpha-D-glucosamine and UDP-N-acetyl-alpha-D-galactosamine/UDP-GalNAc transport from the cytosol to the lumen of the Golgi. In Homo sapiens (Human), this protein is UDP-sugar transporter protein SLC35A5.